The primary structure comprises 117 residues: MIRIKDNFKNYKKHKKILKLSKGFIGSNSKIFKISNQKIMKALYFSFSDRKKKKRSNKKIWINRINYFLKNYFFNNFNYNKIINKIKLNKICINKKILSEIIINDYKTIYKLKNMLT.

Belongs to the bacterial ribosomal protein bL20 family.

Its subcellular location is the plastid. Functionally, binds directly to 23S ribosomal RNA and is necessary for the in vitro assembly process of the 50S ribosomal subunit. It is not involved in the protein synthesizing functions of that subunit. The polypeptide is Large ribosomal subunit protein bL20c (rpl20) (Euglena longa (Euglenophycean alga)).